A 569-amino-acid chain; its full sequence is Potassium-transporting ATPase potassium-binding subunit (569 aa).

10 helical membrane passes run 11–31, 64–84, 135–155, 179–199, 258–278, 285–305, 384–404, 423–443, 490–510, and 531–551; these read LLLA…ACVF, LAYT…LYGI, AGLA…ALAV, LYLL…MGIP, FNIL…GKMV, WALI…VYIA, GLYG…LMVG, MLAV…AAVL, LGIS…AIAG, and LFVG…YFPA.

The protein belongs to the KdpA family. In terms of assembly, the system is composed of three essential subunits: KdpA, KdpB and KdpC.

The protein localises to the cell inner membrane. Functionally, part of the high-affinity ATP-driven potassium transport (or Kdp) system, which catalyzes the hydrolysis of ATP coupled with the electrogenic transport of potassium into the cytoplasm. This subunit binds the periplasmic potassium ions and delivers the ions to the membrane domain of KdpB through an intramembrane tunnel. This chain is Potassium-transporting ATPase potassium-binding subunit, found in Allorhizobium ampelinum (strain ATCC BAA-846 / DSM 112012 / S4) (Agrobacterium vitis (strain S4)).